The primary structure comprises 266 residues: uncharacterized protein (266 aa).

It belongs to the chlamydial CPn_0087/CT_309/TC_0583 family.

This is an uncharacterized protein from Chlamydia pneumoniae (Chlamydophila pneumoniae).